The sequence spans 87 residues: Putative regulatory protein GK1166 (87 aa).

The protein belongs to the RemA family.

This chain is Putative regulatory protein GK1166, found in Geobacillus kaustophilus (strain HTA426).